The chain runs to 162 residues: Disulfide bond formation protein B (162 aa).

Topologically, residues 1-8 (MTPLFRKA) are cytoplasmic. A helical membrane pass occupies residues 9-25 (VWLLFAVSVCAFAGSLA). The Periplasmic segment spans residues 26 to 43 (AQYVLGMEPCVLCISQRL). The cysteines at positions 35 and 38 are disulfide-linked. The helical transmembrane segment at 44 to 60 (CVLATALCTAIVLMCRP) threads the bilayer. Topologically, residues 61-67 (RRRAGGL) are cytoplasmic. The helical transmembrane segment at 68 to 85 (FGAVFISIPAVTGISVAA) threads the bilayer. Residues 86-141 (YQLWLQSLPPGTAPSCGAPWTFRLKGWPLFDWFEPVVRGFGNCAEPDYLLGIALPV) lie on the Periplasmic side of the membrane. Cysteines 101 and 128 form a disulfide. Residues 142–160 (WSVAYFLAVVLTVWWAWAR) form a helical membrane-spanning segment. The Cytoplasmic segment spans residues 161-162 (AK).

This sequence belongs to the DsbB family.

The protein resides in the cell inner membrane. Functionally, required for disulfide bond formation in some periplasmic proteins. Acts by oxidizing the DsbA protein. The polypeptide is Disulfide bond formation protein B (Neisseria meningitidis serogroup B (strain ATCC BAA-335 / MC58)).